The sequence spans 782 residues: MSGEDGPAAGPGAAAAAAAARERRQEQLRQWGARAGADPGPGERRARTVRFERAAEFLAACAGGDLDEARLMLRAADPGPGSGAASDPAVPPPARAVLDSTNADGISALHQACIDENLEVVRFLVEQGATVNQADNEGWTPLHVAASCGYLDIARYLLSHGANIAAVNSDGDLPLDLAESDAMEGLLKAEITRRGVDVEAAKRAEEELLLHDTRCWLNGGAMPEARHPRTGASALHVAAAKGYIEVMRLLLQAGYDTELRDGDGWTPLHAAAHWGVEDACRLLAEHGGGMDSLTHAGQRPCDLADEDVMNLLEELAQKQEDLRNQKEGSQGRGQESQVPSSSKHRRSSVCRLSSREKISLQDLSKERRPGGAGGPPIGDEDEGGEASAEHPAVEPRALNGVSSPVSSNPKSPVLPEEAPFSRRFGLQKTGSTGALGPSERRATEGVLGLQRSASSSLLEKASTQAREPRLARITPTPAQKVPEPFTLYEAATPPSLDHSVPPSRREPGSIVKPNVLTASAAPLADSRDRRRSYQMPVRDEESESQRKARSRLMRQSRRSTQGVTLTDLKEAEKVAGKVPEPEQPALPSLDPSRRPRVPGVENAEGPAQREAPEGQGQGPQAAREHRKAGHERRGPAEGEEAGPAERSPECSTVDGGSQVRRQHSQRDLVLESKQEHEEPDGGFRKMYTELRRENERLREALTETTLRLAQLKVELERATQRQERFAERPALLELERFERRALERKAAELEEELKALSDLRADNQRLKDENAALIRVISKLSK.

2 stretches are compositionally biased toward low complexity: residues 1–19 (MSGEDGPAAGPGAAAAAAA) and 77–88 (DPGPGSGAASDP). Disordered regions lie at residues 1–45 (MSGE…GERR) and 77–98 (DPGPGSGAASDPAVPPPARAVL). N-acetylserine is present on Ser2. ANK repeat units lie at residues 104-133 (DGISALHQACIDENLEVVRFLVEQGATVNQ), 137-166 (EGWTPLHVAASCGYLDIARYLLSHGANIAA), 230-259 (TGASALHVAAAKGYIEVMRLLLQAGYDTEL), and 263-292 (DGWTPLHAAAHWGVEDACRLLAEHGGGMDS). Residues 301–332 (CDLADEDVMNLLEELAQKQEDLRNQKEGSQGR) are a coiled coil. Residues 321–685 (DLRNQKEGSQ…HEEPDGGFRK (365 aa)) are disordered. The span at 332–341 (RGQESQVPSS) shows a compositional bias: polar residues. Positions 353–369 (SSREKISLQDLSKERRP) are enriched in basic and acidic residues. Residues 401–413 (VSSPVSSNPKSPV) are compositionally biased toward low complexity. 5 positions are modified to phosphoserine: Ser403, Ser411, Ser431, Ser454, and Ser509. Residues 451-465 (RSASSSLLEKASTQA) are compositionally biased toward polar residues. The span at 537-546 (VRDEESESQR) shows a compositional bias: basic and acidic residues. The span at 547-557 (KARSRLMRQSR) shows a compositional bias: basic residues. Thr560 carries the phosphothreonine modification. A Phosphoserine modification is found at Ser647. Positions 664 to 685 (SQRDLVLESKQEHEEPDGGFRK) are enriched in basic and acidic residues. Positions 681–782 (GGFRKMYTEL…LIRVISKLSK (102 aa)) form a coiled coil.

PP1 comprises a catalytic subunit, PPP1CA, PPP1CB or PPP1CC, and one or several targeting or regulatory subunits. PPP1R12C mediates binding to myosin. Interacts via its N-terminus with PPP1CB. Interacts with IL16. Interacts with the coiled-coil domain of MPRIP. Interacts with NOD2. Phosphorylation at Thr-560 is essential for its interaction with PPP1CB.

It localises to the cytoplasm. It is found in the cytoskeleton. The protein resides in the stress fiber. Regulates myosin phosphatase activity. This chain is Protein phosphatase 1 regulatory subunit 12C, found in Mus musculus (Mouse).